The sequence spans 426 residues: Transcription termination factor Rho (426 aa).

The Rho RNA-BD domain maps to Gln58 to Asp131. ATP-binding positions include Gly176–Ala181, Lys188–Thr193, and Arg219.

It belongs to the Rho family. Homohexamer. The homohexamer assembles into an open ring structure.

Functionally, facilitates transcription termination by a mechanism that involves Rho binding to the nascent RNA, activation of Rho's RNA-dependent ATPase activity, and release of the mRNA from the DNA template. In Deinococcus radiodurans (strain ATCC 13939 / DSM 20539 / JCM 16871 / CCUG 27074 / LMG 4051 / NBRC 15346 / NCIMB 9279 / VKM B-1422 / R1), this protein is Transcription termination factor Rho.